A 250-amino-acid polypeptide reads, in one-letter code: AA9 family lytic polysaccharide monooxygenase B (250 aa).

Residues 1-21 form the signal peptide; the sequence is MTLSKITSIAGLLASASLVAG. Cu(2+) is bound by residues His-22 and His-107. Residue His-22 is modified to Methylhistidine. 2 cysteine pairs are disulfide-bonded: Cys-77–Cys-199 and Cys-118–Cys-122. N-linked (GlcNAc...) asparagine glycosylation occurs at Asn-159. His-185 and Gln-194 together coordinate O2. Residue Tyr-196 participates in Cu(2+) binding.

Belongs to the polysaccharide monooxygenase AA9 family. Cu(2+) is required as a cofactor. The catalytically essential N-terminal histidine His-22 is post-translationally modified by methylation to prevent protonation of the histidine side chain, and protect the critical active site of the enzyme from oxidative damage.

It localises to the secreted. The catalysed reaction is [(1-&gt;4)-beta-D-glucosyl]n+m + reduced acceptor + O2 = 4-dehydro-beta-D-glucosyl-[(1-&gt;4)-beta-D-glucosyl]n-1 + [(1-&gt;4)-beta-D-glucosyl]m + acceptor + H2O.. In terms of biological role, lytic polysaccharide monooxygenase (LPMO) that depolymerizes crystalline and amorphous polysaccharides via the oxidation of scissile alpha- or beta-(1-4)-glycosidic bonds, yielding C1 and C4 oxidation products. Catalysis by LPMOs requires the reduction of the active-site copper from Cu(II) to Cu(I) by a reducing agent and H(2)O(2) or O(2) as a cosubstrate. Shows activity on phosphoric acid swollen cellulose, on NaOH pretreated soy spent flakes as well as on crystalline cellulose (Avicel). Does not have a positive effect on cel6A activity, but acts synergistically with endoglucanase egl7. The protein is AA9 family lytic polysaccharide monooxygenase B of Aspergillus fumigatus (strain ATCC MYA-4609 / CBS 101355 / FGSC A1100 / Af293) (Neosartorya fumigata).